We begin with the raw amino-acid sequence, 169 residues long: Biogenesis of lysosome-related organelles complex 1 subunit 4 (169 aa).

It belongs to the BLOC1S4 family. In terms of assembly, component of the biogenesis of lysosome-related organelles complex-1 (BLOC-1) composed of Blos1, Blos2, Blos3, Blos4, Dysb, Muted, Pldn and Snapin. Interacts with Pldn.

Its function is as follows. Component of the biogenesis of lysosome-related organelles complex-1 (BLOC-1) involved in pigment granule biogenesis. The protein is Biogenesis of lysosome-related organelles complex 1 subunit 4 of Drosophila melanogaster (Fruit fly).